A 429-amino-acid polypeptide reads, in one-letter code: Methylenetetrahydrofolate--tRNA-(uracil-5-)-methyltransferase TrmFO (429 aa).

An FAD-binding site is contributed by 7 to 12; sequence GAGLAG.

The protein belongs to the MnmG family. TrmFO subfamily. FAD serves as cofactor.

The protein resides in the cytoplasm. The catalysed reaction is uridine(54) in tRNA + (6R)-5,10-methylene-5,6,7,8-tetrahydrofolate + NADH + H(+) = 5-methyluridine(54) in tRNA + (6S)-5,6,7,8-tetrahydrofolate + NAD(+). It carries out the reaction uridine(54) in tRNA + (6R)-5,10-methylene-5,6,7,8-tetrahydrofolate + NADPH + H(+) = 5-methyluridine(54) in tRNA + (6S)-5,6,7,8-tetrahydrofolate + NADP(+). Catalyzes the folate-dependent formation of 5-methyl-uridine at position 54 (M-5-U54) in all tRNAs. The sequence is that of Methylenetetrahydrofolate--tRNA-(uracil-5-)-methyltransferase TrmFO from Thermosipho africanus (strain TCF52B).